A 219-amino-acid chain; its full sequence is UPF0502 protein Gura_3445 (219 aa).

Positions 162-181 are disordered; the sequence is AGEPDLPDDTPAPPPEPARQ.

Belongs to the UPF0502 family.

The protein is UPF0502 protein Gura_3445 of Geotalea uraniireducens (strain Rf4) (Geobacter uraniireducens).